The sequence spans 401 residues: 1-deoxy-D-xylulose 5-phosphate reductoisomerase (401 aa).

NADPH contacts are provided by T10, G11, S12, I13, G36, N38, and N124. Position 125 (K125) interacts with 1-deoxy-D-xylulose 5-phosphate. Residue E126 participates in NADPH binding. D150 is a binding site for Mn(2+). 1-deoxy-D-xylulose 5-phosphate is bound by residues S151, E152, S186, and H209. A Mn(2+)-binding site is contributed by E152. Residue G215 participates in NADPH binding. Residues S222, N227, K228, and E231 each contribute to the 1-deoxy-D-xylulose 5-phosphate site. Position 231 (E231) interacts with Mn(2+).

The protein belongs to the DXR family. Mg(2+) serves as cofactor. It depends on Mn(2+) as a cofactor.

The catalysed reaction is 2-C-methyl-D-erythritol 4-phosphate + NADP(+) = 1-deoxy-D-xylulose 5-phosphate + NADPH + H(+). Its pathway is isoprenoid biosynthesis; isopentenyl diphosphate biosynthesis via DXP pathway; isopentenyl diphosphate from 1-deoxy-D-xylulose 5-phosphate: step 1/6. Functionally, catalyzes the NADPH-dependent rearrangement and reduction of 1-deoxy-D-xylulose-5-phosphate (DXP) to 2-C-methyl-D-erythritol 4-phosphate (MEP). The polypeptide is 1-deoxy-D-xylulose 5-phosphate reductoisomerase (Vibrio parahaemolyticus serotype O3:K6 (strain RIMD 2210633)).